The following is a 585-amino-acid chain: Aspartate--tRNA ligase (585 aa).

Position 171 (glutamate 171) interacts with L-aspartate. Positions 195–198 (QLFK) are aspartate. Arginine 217 serves as a coordination point for L-aspartate. Residues 217 to 219 (RDE) and glutamine 226 each bind ATP. Histidine 448 provides a ligand contact to L-aspartate. Glutamate 482 contributes to the ATP binding site. Arginine 489 contacts L-aspartate. 534-537 (GLDR) serves as a coordination point for ATP.

The protein belongs to the class-II aminoacyl-tRNA synthetase family. Type 1 subfamily. As to quaternary structure, homodimer.

It is found in the cytoplasm. The catalysed reaction is tRNA(Asp) + L-aspartate + ATP = L-aspartyl-tRNA(Asp) + AMP + diphosphate. Functionally, catalyzes the attachment of L-aspartate to tRNA(Asp) in a two-step reaction: L-aspartate is first activated by ATP to form Asp-AMP and then transferred to the acceptor end of tRNA(Asp). The chain is Aspartate--tRNA ligase from Histophilus somni (strain 129Pt) (Haemophilus somnus).